A 298-amino-acid polypeptide reads, in one-letter code: Oxygen-dependent coproporphyrinogen-III oxidase (298 aa).

S92 is a substrate binding site. A divalent metal cation contacts are provided by H96 and H106. H106 acts as the Proton donor in catalysis. 108–110 is a substrate binding site; it reads NVR. A divalent metal cation contacts are provided by H145 and H175. The tract at residues 239-274 is important for dimerization; it reads YVEFNLVYDRGTLFGLQSGGRSESILMSLPPRVRWE. 257–259 is a substrate binding site; the sequence is GGR.

The protein belongs to the aerobic coproporphyrinogen-III oxidase family. In terms of assembly, homodimer. It depends on a divalent metal cation as a cofactor.

Its subcellular location is the cytoplasm. The enzyme catalyses coproporphyrinogen III + O2 + 2 H(+) = protoporphyrinogen IX + 2 CO2 + 2 H2O. It functions in the pathway porphyrin-containing compound metabolism; protoporphyrin-IX biosynthesis; protoporphyrinogen-IX from coproporphyrinogen-III (O2 route): step 1/1. Involved in the heme biosynthesis. Catalyzes the aerobic oxidative decarboxylation of propionate groups of rings A and B of coproporphyrinogen-III to yield the vinyl groups in protoporphyrinogen-IX. In Stenotrophomonas maltophilia (strain K279a), this protein is Oxygen-dependent coproporphyrinogen-III oxidase.